We begin with the raw amino-acid sequence, 288 residues long: HTH-type transcriptional regulator CzcR (288 aa).

The 58-residue stretch at Met1–Ser58 folds into the HTH lysR-type domain. The segment at residues Ile18 to Lys37 is a DNA-binding region (H-T-H motif).

It belongs to the LysR transcriptional regulatory family.

This chain is HTH-type transcriptional regulator CzcR (czcR), found in Bacillus subtilis (strain 168).